A 115-amino-acid polypeptide reads, in one-letter code: MNLMITLLTNFTLATLLVTIAFWLPQLNVYSEKTSPYECGFDPMGSARLPFSMKFFLVAITFLLFDLEIALLLPLPWASQTTNLNTMLTMALLLIFLLAVSLAYEWTQKGLEWTE.

A run of 3 helical transmembrane segments spans residues 3 to 23 (LMITLLTNFTLATLLVTIAFW), 55 to 75 (FFLVAITFLLFDLEIALLLPL), and 84 to 104 (LNTMLTMALLLIFLLAVSLAY).

The protein belongs to the complex I subunit 3 family. Core subunit of respiratory chain NADH dehydrogenase (Complex I) which is composed of 45 different subunits. Interacts with TMEM186. Interacts with TMEM242.

It is found in the mitochondrion inner membrane. The enzyme catalyses a ubiquinone + NADH + 5 H(+)(in) = a ubiquinol + NAD(+) + 4 H(+)(out). In terms of biological role, core subunit of the mitochondrial membrane respiratory chain NADH dehydrogenase (Complex I) which catalyzes electron transfer from NADH through the respiratory chain, using ubiquinone as an electron acceptor. Essential for the catalytic activity of complex I. This chain is NADH-ubiquinone oxidoreductase chain 3, found in Ovis aries (Sheep).